Consider the following 172-residue polypeptide: Large ribosomal subunit protein bL9 (172 aa).

It belongs to the bacterial ribosomal protein bL9 family.

Its function is as follows. Binds to the 23S rRNA. This Chlamydia abortus (strain DSM 27085 / S26/3) (Chlamydophila abortus) protein is Large ribosomal subunit protein bL9.